We begin with the raw amino-acid sequence, 101 residues long: Small ribosomal subunit protein uS14 (101 aa).

It belongs to the universal ribosomal protein uS14 family. In terms of assembly, part of the 30S ribosomal subunit. Contacts proteins S3 and S10.

Functionally, binds 16S rRNA, required for the assembly of 30S particles and may also be responsible for determining the conformation of the 16S rRNA at the A site. In Vibrio vulnificus (strain CMCP6), this protein is Small ribosomal subunit protein uS14.